The primary structure comprises 359 residues: Type-1 angiotensin II receptor (359 aa).

The Extracellular portion of the chain corresponds to 1–25 (MILNSSTEDGIKRIQDDCPKAGRHN). Asn-4 is a glycosylation site (N-linked (GlcNAc...) asparagine). Residues Gln-15 and Asp-17 each contribute to the angiotensin II site. Disulfide bonds link Cys-18–Cys-274 and Cys-101–Cys-180. The helical transmembrane segment at 26–55 (YIFVMIPTLYSIIFVVGIFGNSLVVIVIYF) threads the bilayer. The Cytoplasmic portion of the chain corresponds to 56–61 (YMKLKT). A helical transmembrane segment spans residues 62–89 (VASVFLLNLALADLCFLLTLPLWAVYTA). The Extracellular segment spans residues 90 to 98 (MEYRWPFGN). Residues 99–125 (YLCKIASASVSFNLYASVFLLTCLSID) form a helical membrane-spanning segment. At 126 to 141 (RYVAIVHPMKSPVRRT) the chain is on the cytoplasmic side. Residues 142-165 (MLMAKVTCIIIWLLAGLASLPTII) traverse the membrane as a helical segment. The Extracellular segment spans residues 166–190 (HRNVFFIENTNITVCAFHYESQNST). Arg-167 contributes to the angiotensin II binding site. Asn-176 carries an N-linked (GlcNAc...) asparagine glycan. Residues Phe-182, His-183, and Tyr-184 each contribute to the angiotensin II site. Asn-188 carries N-linked (GlcNAc...) asparagine glycosylation. Residues 191-216 (LPIGLGLTKNILGFLFPFLIILTSYT) form a helical membrane-spanning segment. Residue Lys-199 coordinates angiotensin II. Over 217 to 239 (LIWKTLKRAYEIQKNKPRNDDIF) the chain is Cytoplasmic. The helical transmembrane segment at 240–268 (KIIMAIVLFFFFSWVPHQIFTFLDVLIQL) threads the bilayer. Topologically, residues 269 to 278 (GIIHDCKIAD) are extracellular. Residues 279 to 304 (IVDTAMPITICIAYFNNCLNPLFYGF) traverse the membrane as a helical segment. The Cytoplasmic segment spans residues 305-359 (LGKKFKKYFLQLLKYIPPKAKSHSSLSTKMSTLSYRPSDHGNASTKKSASCVEVE). A compositionally biased stretch (polar residues) spans 335–352 (STLSYRPSDHGNASTKKS). The interval 335 to 359 (STLSYRPSDHGNASTKKSASCVEVE) is disordered. Residue Cys-355 is the site of S-palmitoyl cysteine attachment.

It belongs to the G-protein coupled receptor 1 family. Interacts with MAS1. Interacts with ARRB1. Interacts with FLNA (via filamin repeat 21); increases PKA-mediated phosphorylation of FLNA. C-terminal Ser or Thr residues may be phosphorylated. In terms of tissue distribution, adrenal, liver, aorta, kidney, lung, testis and heart.

The protein resides in the cell membrane. Receptor for angiotensin II, a vasoconstricting peptide, which acts as a key regulator of blood pressure and sodium retention by the kidney. The activated receptor in turn couples to G-alpha proteins G(q) (GNAQ, GNA11, GNA14 or GNA15) and thus activates phospholipase C and increases the cytosolic Ca(2+) concentrations, which in turn triggers cellular responses such as stimulation of protein kinase C. This chain is Type-1 angiotensin II receptor (AGTR1), found in Canis lupus familiaris (Dog).